Reading from the N-terminus, the 330-residue chain is Polyprenal reductase (330 aa).

The Cytoplasmic portion of the chain corresponds to 1–19; sequence MASWVGTELSALNPLRTLW. A helical transmembrane segment spans residues 20 to 40; sequence LALAAAFLLALLLQLAPAGLL. Topologically, residues 41-74 are lumenal; that stretch reads PNCALFQDLIRYGKTKLSGPRRPAVCRAFDVPKR. Residues 75-95 form a helical membrane-spanning segment; the sequence is YFSHFYVVSVLWNGFLLWFLS. The Cytoplasmic portion of the chain corresponds to 96–132; that stretch reads RSLFLGAPFPNWLRALLRTLGSTQFRALEMESKASQM. Residues 133 to 153 form a helical membrane-spanning segment; it reads LVGELALSAFLVLVFLWVHSV. At 154-168 the chain is on the lumenal side; the sequence is RRLFECFYISVFSNA. A helical transmembrane segment spans residues 169-189; it reads VMHVVQYCFGLVYYVLVGLTV. Over 190–206 the chain is Cytoplasmic; it reads LSQVPMDDKNVYMLGKN. Residues 207 to 227 form a helical membrane-spanning segment; that stretch reads LLLPARWFHVLGMMMFLWSSA. The Lumenal portion of the chain corresponds to 228–277; that stretch reads HQYECHVILSNLRRNKKGAIVHCQHRIPFGDWFEYVSSANYLAELMIYIS. A helical transmembrane segment spans residues 278–298; it reads MAVTFGFHNFTWWLVVAYVFF. Residues 299 to 330 lie on the Cytoplasmic side of the membrane; sequence CQALSAFFNHKFYKSTFVSYPKHRKAFLPFLF.

The protein belongs to the steroid 5-alpha reductase family. Polyprenal reductase subfamily.

The protein localises to the endoplasmic reticulum membrane. It carries out the reaction a di-trans,poly-cis-dolichal + NADP(+) = a di-trans,poly-cis-polyprenal + NADPH + H(+). It catalyses the reaction a 3-oxo-5alpha-steroid + NADP(+) = a 3-oxo-Delta(4)-steroid + NADPH + H(+). The enzyme catalyses androst-4-ene-3,17-dione + NADPH + H(+) = 5alpha-androstan-3,17-dione + NADP(+). The catalysed reaction is 17beta-hydroxy-5alpha-androstan-3-one + NADP(+) = testosterone + NADPH + H(+). It participates in protein modification; protein glycosylation. Its function is as follows. Plays a key role in early steps of protein N-linked glycosylation by being involved in the conversion of polyprenol into dolichol. Acts as a polyprenal reductase that mediates the reduction of polyprenal into dolichal in a NADP-dependent mechanism. Dolichols are required for the synthesis of dolichol-linked monosaccharides and the oligosaccharide precursor used for N-glycosylation. Also able to convert testosterone (T) into 5-alpha-dihydrotestosterone (DHT). The protein is Polyprenal reductase of Mesocricetus auratus (Golden hamster).